The chain runs to 267 residues: Phosphate import ATP-binding protein PstB 2 (267 aa).

One can recognise an ABC transporter domain in the interval 21 to 262; sequence LATKDLHVYY…AQCQSTNDYV (242 aa). An ATP-binding site is contributed by 53–60; that stretch reads GPSGCGKS.

It belongs to the ABC transporter superfamily. Phosphate importer (TC 3.A.1.7) family. The complex is composed of two ATP-binding proteins (PstB), two transmembrane proteins (PstC and PstA) and a solute-binding protein (PstS).

It is found in the cell membrane. It carries out the reaction phosphate(out) + ATP + H2O = ADP + 2 phosphate(in) + H(+). Its function is as follows. Part of the ABC transporter complex PstSACB involved in phosphate import. Responsible for energy coupling to the transport system. This chain is Phosphate import ATP-binding protein PstB 2, found in Streptococcus pyogenes serotype M18 (strain MGAS8232).